The sequence spans 176 residues: Cytochrome b (176 aa).

A run of 3 helical transmembrane segments spans residues 33–53, 77–98, and 113–133; these read FGSLLGICLALQILTGIFLAM, WVLRYLHANGASMFFICLYLHV, and WNMGVILLFAVMATAFMGYVL. Heme b contacts are provided by histidine 83 and histidine 97.

This sequence belongs to the cytochrome b family. As to quaternary structure, the cytochrome bc1 complex contains 11 subunits: 3 respiratory subunits (MT-CYB, CYC1 and UQCRFS1), 2 core proteins (UQCRC1 and UQCRC2) and 6 low-molecular weight proteins (UQCRH/QCR6, UQCRB/QCR7, UQCRQ/QCR8, UQCR10/QCR9, UQCR11/QCR10 and a cleavage product of UQCRFS1). This cytochrome bc1 complex then forms a dimer. It depends on heme b as a cofactor.

It is found in the mitochondrion inner membrane. Component of the ubiquinol-cytochrome c reductase complex (complex III or cytochrome b-c1 complex) that is part of the mitochondrial respiratory chain. The b-c1 complex mediates electron transfer from ubiquinol to cytochrome c. Contributes to the generation of a proton gradient across the mitochondrial membrane that is then used for ATP synthesis. This chain is Cytochrome b (MT-CYB), found in Lasionycteris noctivagans (Silver-haired bat).